The sequence spans 304 residues: Putative AraC-like transcription regulator (304 aa).

Residues 202–300 enclose the HTH araC/xylS-type domain; that stretch reads ATALTCLHRD…GMPPGDYRKH (99 aa). DNA-binding regions (H-T-H motif) lie at residues 219 to 240 and 267 to 290; these read ADLA…KATV and LASI…KRVL.

The polypeptide is Putative AraC-like transcription regulator (Streptomyces lividans).